The chain runs to 399 residues: Acetate kinase (399 aa).

Residue Asn9 participates in Mg(2+) binding. Lys16 contributes to the ATP binding site. Arg90 contributes to the substrate binding site. Asp147 (proton donor/acceptor) is an active-site residue. ATP is bound by residues 207-211 (HLGNG), 281-283 (DFR), and 333-337 (GVGEN). Glu387 serves as a coordination point for Mg(2+).

It belongs to the acetokinase family. Homodimer. Requires Mg(2+) as cofactor. Mn(2+) is required as a cofactor.

Its subcellular location is the cytoplasm. It catalyses the reaction acetate + ATP = acetyl phosphate + ADP. The protein operates within metabolic intermediate biosynthesis; acetyl-CoA biosynthesis; acetyl-CoA from acetate: step 1/2. Catalyzes the formation of acetyl phosphate from acetate and ATP. Can also catalyze the reverse reaction. This chain is Acetate kinase, found in Mycobacterium sp. (strain KMS).